A 411-amino-acid polypeptide reads, in one-letter code: Serine hydroxymethyltransferase (411 aa).

(6S)-5,6,7,8-tetrahydrofolate-binding positions include Leu-119 and 123–125 (GHL). Lys-228 carries the post-translational modification N6-(pyridoxal phosphate)lysine. Position 351–353 (351–353 (SPF)) interacts with (6S)-5,6,7,8-tetrahydrofolate.

Belongs to the SHMT family. Homodimer. Requires pyridoxal 5'-phosphate as cofactor.

It localises to the cytoplasm. The enzyme catalyses (6R)-5,10-methylene-5,6,7,8-tetrahydrofolate + glycine + H2O = (6S)-5,6,7,8-tetrahydrofolate + L-serine. It functions in the pathway one-carbon metabolism; tetrahydrofolate interconversion. The protein operates within amino-acid biosynthesis; glycine biosynthesis; glycine from L-serine: step 1/1. Functionally, catalyzes the reversible interconversion of serine and glycine with tetrahydrofolate (THF) serving as the one-carbon carrier. This reaction serves as the major source of one-carbon groups required for the biosynthesis of purines, thymidylate, methionine, and other important biomolecules. Also exhibits THF-independent aldolase activity toward beta-hydroxyamino acids, producing glycine and aldehydes, via a retro-aldol mechanism. The sequence is that of Serine hydroxymethyltransferase from Clostridium botulinum (strain Alaska E43 / Type E3).